The following is a 148-amino-acid chain: Hemoglobin subunit beta (148 aa).

Positions Xaa-3 to His-148 constitute a Globin domain. Positions 64 and 93 each coordinate heme b.

It belongs to the globin family. Heterotetramer of two alpha chains and two beta chains. Red blood cells.

Involved in oxygen transport from gills to the various peripheral tissues. The polypeptide is Hemoglobin subunit beta (hbb) (Decapterus maruadsi (Japanese scad)).